We begin with the raw amino-acid sequence, 185 residues long: Peptide deformylase (185 aa).

Fe cation-binding residues include Cys-109 and His-152. Glu-153 is an active-site residue. Position 156 (His-156) interacts with Fe cation.

The protein belongs to the polypeptide deformylase family. Requires Fe(2+) as cofactor.

It catalyses the reaction N-terminal N-formyl-L-methionyl-[peptide] + H2O = N-terminal L-methionyl-[peptide] + formate. In terms of biological role, removes the formyl group from the N-terminal Met of newly synthesized proteins. Requires at least a dipeptide for an efficient rate of reaction. N-terminal L-methionine is a prerequisite for activity but the enzyme has broad specificity at other positions. This chain is Peptide deformylase, found in Roseiflexus castenholzii (strain DSM 13941 / HLO8).